The primary structure comprises 348 residues: Protein RecA (348 aa).

66-73 (GPESSGKT) contacts ATP.

The protein belongs to the RecA family.

Its subcellular location is the cytoplasm. In terms of biological role, can catalyze the hydrolysis of ATP in the presence of single-stranded DNA, the ATP-dependent uptake of single-stranded DNA by duplex DNA, and the ATP-dependent hybridization of homologous single-stranded DNAs. It interacts with LexA causing its activation and leading to its autocatalytic cleavage. In Legionella pneumophila (strain Lens), this protein is Protein RecA.